A 571-amino-acid polypeptide reads, in one-letter code: Proline--tRNA ligase (571 aa).

The protein belongs to the class-II aminoacyl-tRNA synthetase family. ProS type 1 subfamily. As to quaternary structure, homodimer.

The protein resides in the cytoplasm. It carries out the reaction tRNA(Pro) + L-proline + ATP = L-prolyl-tRNA(Pro) + AMP + diphosphate. Catalyzes the attachment of proline to tRNA(Pro) in a two-step reaction: proline is first activated by ATP to form Pro-AMP and then transferred to the acceptor end of tRNA(Pro). As ProRS can inadvertently accommodate and process non-cognate amino acids such as alanine and cysteine, to avoid such errors it has two additional distinct editing activities against alanine. One activity is designated as 'pretransfer' editing and involves the tRNA(Pro)-independent hydrolysis of activated Ala-AMP. The other activity is designated 'posttransfer' editing and involves deacylation of mischarged Ala-tRNA(Pro). The misacylated Cys-tRNA(Pro) is not edited by ProRS. The protein is Proline--tRNA ligase of Shewanella baltica (strain OS185).